The following is a 323-amino-acid chain: Flavone synthase cfoJ (323 aa).

FMN is required as a cofactor.

It participates in secondary metabolite biosynthesis; flavonoid biosynthesis. In terms of biological role, FMN-dependent oxidoreductase; part of the gene cluster that mediates the biosynthesis of chlorflavonin, a fungal flavonoid with acetolactate synthase inhibitory activity. Within the pathway, cfoJ acts as a flavone synthase (FNS) and catalyzes the formation of a double bond between C2 and C3, converting the flavanone into a flavone. The pathway begins with the PKS-NRPS hybrid synthetase cfoA that uses benzoic acid or p-hydroxybenzoic acid as a starter unit with four rounds of chain elongation using malonyl-CoA to form the chalcone skeleton. Then, a new type of chalcone isomerase, cfoK, catalyzes the conversion of the chalcone into a flavanone by a histidine-mediated oxa-Michael addition mechanism. The desaturation of flavanone to flavone is catalyzed by a new type of flavone synthase, the flavin mononucleotide (FMN)-dependent oxidoreductase cfoJ. Monooxygenases cfoF, cfoG, and P450 cfoH are responsible for the hydroxylation of the flavonoid skeleton at sites C3, C8, and C2', respectively. Like cfoF, the dehydratase cfoI plays also a role in the hydroxylation of position C3. Methyltransferases cfoB, cfoC, and cfoD then catalyze the methylation of C7-OH, C8-OH, and C3-OH, respectively. Finally, the monooxygenase cfoE is responsible for the chlorination of flavonoid at position C3'. The polypeptide is Flavone synthase cfoJ (Aspergillus candidus).